Here is a 454-residue protein sequence, read N- to C-terminus: tRNA modification GTPase MnmE (454 aa).

The (6S)-5-formyl-5,6,7,8-tetrahydrofolate site is built by arginine 23, glutamate 86, and arginine 125. Positions 221–376 (GLTLAIVGRP…LREQILRMVS (156 aa)) constitute a TrmE-type G domain. Residue asparagine 231 participates in K(+) binding. Residues 231 to 236 (NVGKSS), 250 to 256 (TAIPGTT), and 275 to 278 (DTAG) each bind GTP. A Mg(2+)-binding site is contributed by serine 235. The K(+) site is built by threonine 250, isoleucine 252, and threonine 255. Threonine 256 provides a ligand contact to Mg(2+). Residue lysine 454 coordinates (6S)-5-formyl-5,6,7,8-tetrahydrofolate.

It belongs to the TRAFAC class TrmE-Era-EngA-EngB-Septin-like GTPase superfamily. TrmE GTPase family. As to quaternary structure, homodimer. Heterotetramer of two MnmE and two MnmG subunits. It depends on K(+) as a cofactor.

It is found in the cytoplasm. In terms of biological role, exhibits a very high intrinsic GTPase hydrolysis rate. Involved in the addition of a carboxymethylaminomethyl (cmnm) group at the wobble position (U34) of certain tRNAs, forming tRNA-cmnm(5)s(2)U34. In Koribacter versatilis (strain Ellin345), this protein is tRNA modification GTPase MnmE.